Here is an 804-residue protein sequence, read N- to C-terminus: Phenylalanine--tRNA ligase beta subunit (804 aa).

The 109-residue stretch at 39-147 folds into the tRNA-binding domain; that stretch reads GEGLDSVVTA…PDCEPGQPVF (109 aa). The 80-residue stretch at 401–480 folds into the B5 domain; it reads LAERKVTLAV…RLNGYDNIPV (80 aa). Mg(2+)-binding residues include Asp458, Asp464, Glu467, and Glu468. Residues 711–804 form the FDX-ACB domain; it reads SRFPQVARDS…LIAKLGAEIR (94 aa).

This sequence belongs to the phenylalanyl-tRNA synthetase beta subunit family. Type 1 subfamily. As to quaternary structure, tetramer of two alpha and two beta subunits. Mg(2+) is required as a cofactor.

It localises to the cytoplasm. The catalysed reaction is tRNA(Phe) + L-phenylalanine + ATP = L-phenylalanyl-tRNA(Phe) + AMP + diphosphate + H(+). This Syntrophotalea carbinolica (strain DSM 2380 / NBRC 103641 / GraBd1) (Pelobacter carbinolicus) protein is Phenylalanine--tRNA ligase beta subunit.